A 149-amino-acid polypeptide reads, in one-letter code: Cell division protein SepF (149 aa).

It belongs to the SepF family. As to quaternary structure, homodimer. Interacts with FtsZ.

It localises to the cytoplasm. In terms of biological role, cell division protein that is part of the divisome complex and is recruited early to the Z-ring. Probably stimulates Z-ring formation, perhaps through the cross-linking of FtsZ protofilaments. Its function overlaps with FtsA. This Pelotomaculum thermopropionicum (strain DSM 13744 / JCM 10971 / SI) protein is Cell division protein SepF.